Consider the following 101-residue polypeptide: Protein Tat (101 aa).

The segment at 1-24 is interaction with human CREBBP; sequence MEPVDPNLEPWKHPGSQPRTACNN. The interval 1–48 is transactivation; the sequence is MEPVDPNLEPWKHPGSQPRTACNNCYCKKCCFHCQVCFTKKGLGISYG. Positions 22, 25, and 27 each coordinate Zn(2+). The cysteine-rich stretch occupies residues 22-37; it reads CNNCYCKKCCFHCQVC. Lys28 is subject to N6-acetyllysine; by host PCAF. Residues Cys30, His33, Cys34, and Cys37 each coordinate Zn(2+). Positions 38-48 are core; it reads FTKKGLGISYG. The tract at residues 47-101 is disordered; the sequence is YGRKKRRQRRRPPQDSQTHQSSLSKQPTSQLRGDPTGPTESKKKVERETETDPVH. Over residues 48 to 57 the composition is skewed to basic residues; the sequence is GRKKRRQRRR. A Nuclear localization signal, RNA-binding (TAR), and protein transduction motif is present at residues 49–57; that stretch reads RKKRRQRRR. The tract at residues 49-86 is interaction with the host capping enzyme RNGTT; that stretch reads RKKRRQRRRPPQDSQTHQSSLSKQPTSQLRGDPTGPTE. 2 positions are modified to N6-acetyllysine; by host EP300 and GCN5L2: Lys50 and Lys51. Asymmetric dimethylarginine; by host PRMT6 occurs at positions 52 and 53. Polar residues predominate over residues 61-77; it reads DSQTHQSSLSKQPTSQL. A Glycyl lysine isopeptide (Lys-Gly) (interchain with G-Cter in ubiquitin) cross-link involves residue Lys71. The Cell attachment site motif lies at 78–80; it reads RGD. Residues 86-101 show a composition bias toward basic and acidic residues; it reads ESKKKVERETETDPVH.

It belongs to the lentiviruses Tat family. Interacts with host CCNT1. Associates with the P-TEFb complex composed at least of Tat, P-TEFb (CDK9 and CCNT1), TAR RNA, RNA Pol II. Recruits the HATs CREBBP, TAF1/TFIID, EP300, PCAF and GCN5L2. Interacts with host KAT5/Tip60; this interaction targets the latter to degradation. Interacts with the host deacetylase SIRT1. Interacts with host capping enzyme RNGTT; this interaction stimulates RNGTT. Binds to host KDR, and to the host integrins ITGAV/ITGB3 and ITGA5/ITGB1. Interacts with host KPNB1/importin beta-1 without previous binding to KPNA1/importin alpha-1. Interacts with EIF2AK2. Interacts with host nucleosome assembly protein NAP1L1; this interaction may be required for the transport of Tat within the nucleus, since the two proteins interact at the nuclear rim. Interacts with host C1QBP/SF2P32; this interaction involves lysine-acetylated Tat. Interacts with the host chemokine receptors CCR2, CCR3 and CXCR4. Interacts with host DPP4/CD26; this interaction may trigger an anti-proliferative effect. Interacts with host LDLR. Interacts with the host extracellular matrix metalloproteinase MMP1. Interacts with host PRMT6; this interaction mediates Tat's methylation. Interacts with, and is ubiquitinated by MDM2/Hdm2. Interacts with host PSMC3 and HTATIP2. Interacts with STAB1; this interaction may overcome SATB1-mediated repression of IL2 and IL2RA (interleukin) in T cells by binding to the same domain than HDAC1. Interacts (when acetylated) with human CDK13, thereby increasing HIV-1 mRNA splicing and promoting the production of the doubly spliced HIV-1 protein Nef. Interacts with host TBP; this interaction modulates the activity of transcriptional pre-initiation complex. Interacts with host RELA. Interacts with host PLSCR1; this interaction negatively regulates Tat transactivation activity by altering its subcellular distribution. In terms of processing, asymmetrical arginine methylation by host PRMT6 seems to diminish the transactivation capacity of Tat and affects the interaction with host CCNT1. Acetylation by EP300, CREBBP, GCN5L2/GCN5 and PCAF regulates the transactivation activity of Tat. EP300-mediated acetylation of Lys-50 promotes dissociation of Tat from the TAR RNA through the competitive binding to PCAF's bromodomain. In addition, the non-acetylated Tat's N-terminus can also interact with PCAF. PCAF-mediated acetylation of Lys-28 enhances Tat's binding to CCNT1. Lys-50 is deacetylated by SIRT1. Post-translationally, polyubiquitination by host MDM2 does not target Tat to degradation, but activates its transactivation function and fosters interaction with CCNT1 and TAR RNA. In terms of processing, phosphorylated by EIF2AK2 on serine and threonine residues adjacent to the basic region important for TAR RNA binding and function. Phosphorylation of Tat by EIF2AK2 is dependent on the prior activation of EIF2AK2 by dsRNA.

The protein resides in the host nucleus. The protein localises to the host nucleolus. Its subcellular location is the host cytoplasm. It localises to the secreted. Transcriptional activator that increases RNA Pol II processivity, thereby increasing the level of full-length viral transcripts. Recognizes a hairpin structure at the 5'-LTR of the nascent viral mRNAs referred to as the transactivation responsive RNA element (TAR) and recruits the cyclin T1-CDK9 complex (P-TEFb complex) that will in turn hyperphosphorylate the RNA polymerase II to allow efficient elongation. The CDK9 component of P-TEFb and other Tat-activated kinases hyperphosphorylate the C-terminus of RNA Pol II that becomes stabilized and much more processive. Other factors such as HTATSF1/Tat-SF1, SUPT5H/SPT5, and HTATIP2 are also important for Tat's function. Besides its effect on RNA Pol II processivity, Tat induces chromatin remodeling of proviral genes by recruiting the histone acetyltransferases (HATs) CREBBP, EP300 and PCAF to the chromatin. This also contributes to the increase in proviral transcription rate, especially when the provirus integrates in transcriptionally silent region of the host genome. To ensure maximal activation of the LTR, Tat mediates nuclear translocation of NF-kappa-B by interacting with host RELA. Through its interaction with host TBP, Tat may also modulate transcription initiation. Tat can reactivate a latently infected cell by penetrating in it and transactivating its LTR promoter. In the cytoplasm, Tat is thought to act as a translational activator of HIV-1 mRNAs. Functionally, extracellular circulating Tat can be endocytosed by surrounding uninfected cells via the binding to several surface receptors such as CD26, CXCR4, heparan sulfate proteoglycans (HSPG) or LDLR. Neurons are rarely infected, but they internalize Tat via their LDLR. Through its interaction with nuclear HATs, Tat is potentially able to control the acetylation-dependent cellular gene expression. Modulates the expression of many cellular genes involved in cell survival, proliferation or in coding for cytokines or cytokine receptors. Tat plays a role in T-cell and neurons apoptosis. Tat induced neurotoxicity and apoptosis probably contribute to neuroAIDS. Circulating Tat also acts as a chemokine-like and/or growth factor-like molecule that binds to specific receptors on the surface of the cells, affecting many cellular pathways. In the vascular system, Tat binds to ITGAV/ITGB3 and ITGA5/ITGB1 integrins dimers at the surface of endothelial cells and competes with bFGF for heparin-binding sites, leading to an excess of soluble bFGF. This is Protein Tat from Human immunodeficiency virus type 1 group M subtype B (isolate YU-2) (HIV-1).